The following is a 40-amino-acid chain: MNRMLSLSVQSQRAPASPSPYGLKIDKRVSPDYARAGVRS.

Residues Met1–Ala14 show a composition bias toward polar residues. The segment at Met1–Ile25 is disordered.

This is an uncharacterized protein from Treponema pallidum (strain Nichols).